Consider the following 317-residue polypeptide: NF-kappa-B inhibitor alpha (317 aa).

The segment at 1–39 (MFQAAERPQEWAMEGPRDGLKKERLLDDRHDSGLDSMKD) is disordered. Over residues 15-39 (GPRDGLKKERLLDDRHDSGLDSMKD) the composition is skewed to basic and acidic residues. Lys21 is covalently cross-linked (Glycyl lysine isopeptide (Lys-Gly) (interchain with G-Cter in SUMO); alternate). Lys21 participates in a covalent cross-link: Glycyl lysine isopeptide (Lys-Gly) (interchain with G-Cter in ubiquitin); alternate. Residue Lys22 forms a Glycyl lysine isopeptide (Lys-Gly) (interchain with G-Cter in ubiquitin) linkage. The Destruction motif signature appears at 30–36 (HDSGLDS). Ser32 bears the Phosphoserine; by IKKA and IKKE mark. At Ser36 the chain carries Phosphoserine; by IKKA, IKKB, IKKE and TBK1. Tyr42 bears the Phosphotyrosine; by Tyr-kinases mark. Positions 45–54 (MVKELQEIRL) match the Nuclear export signal motif. ANK repeat units follow at residues 73–103 (DGDSFLHLAIIHEEKALTMEVIRQVKGDLAF), 110–139 (LQQTPLHLAVITNQPEIAEALLGAGCDPEL), 143–172 (RGNTPLHLACEQGCLASVGVLTQSCTTPHL), 182–211 (NGHTCLHLASIHGYLGIVELLVSLGADVNA), and 216–245 (NGRTALHLAVDLQNPDLVSLLLKCGADVNR). The short motif at 110-120 (LQQTPLHLAVI) is the Nuclear import signal element. Residues Asn210 and Asn244 each carry the (3S)-3-hydroxyasparagine; by HIF1AN; partial modification. Phosphoserine; by CK2 is present on residues Ser283 and Ser288. Position 291 is a phosphothreonine; by CK2 (Thr291). Phosphoserine; by CK2 is present on Ser293. At Thr299 the chain carries Phosphothreonine; by CK2.

The protein belongs to the NF-kappa-B inhibitor family. In terms of assembly, interacts with RELA; the interaction requires the nuclear import signal. Part of a 70-90 kDa complex at least consisting of CHUK, IKBKB, NFKBIA, RELA, ELP1 and MAP3K14. Interacts with NKIRAS1 and NKIRAS2. Interacts with isoform 1 and isoform 2 of RWDD3; the interaction enhances sumoylation. Interacts with PRMT2. Interacts with PRKACA in platelets; this interaction is disrupted by thrombin and collagen. Interacts with MEFV. Interacts with DDRGK1; positively regulates NFKBIA phosphorylation and degradation. Interacts with HNRNPA2B1; the interaction may be mediated by the RRM2 domain of HNRNPA2B1, and HNRNPA2B1 may interact simultaneously with FAM76B and either NFKBIA or NFKBIE to form a complex. (Microbial infection) Interacts with HBV protein X. Phosphorylated at Ser-32 and Ser-36 by IKKA/CHUK and IKKB/IKBKB; disables inhibition of NF-kappa-B DNA-binding activity. Phosphorylation at positions 32 and 36 is prerequisite to recognition by the SCF(FBXW11) and SCF(BTRC) complexes, leading to polyubiquitination and subsequent degradation. Phosphorylated at Ser-32 in response to FK506 treatment: phosphorylation is independent of IKKA/CHUK and IKKB/IKBKB and promotes NFKBIA degradation, followed by NF-kappa-B activation. Phosphorylated at Tyr-42: its effect is however unclear. According to a report, phosphorylation at Tyr-42 activates NF-kappa-B without triggering proteolytic degradation of NFKBIA. According to another publication, phosphorylation at Tyr-42 inhibits NF-kappa-B activity by preventing phosphorylation at Ser-32 and Ser-36 and subsequent ubiquitination and degradation. In terms of processing, polyubiquitinated at Lys-21 and/or Lys-22 following phosphorylation at Ser-32 and Ser-36. Monoubiquitinated at Lys-21 and/or Lys-22 by UBE2D3. Ubiquitin chain elongation is then performed by CDC34 in cooperation with the SCF(FBXW11) E3 ligase complex, building ubiquitin chains from the UBE2D3-primed NFKBIA-linked ubiquitin. The resulting polyubiquitination leads to protein degradation. Also ubiquitinated by the SCF(BTRC) complex following stimulus-dependent phosphorylation at Ser-32 and Ser-36. Deubiquitinated by USP38, leading to NF-kappa-B inhibition. Post-translationally, sumoylated; sumoylation requires the presence of the nuclear import signal. Sumoylation blocks ubiquitination and proteasome-mediated degradation of the protein thereby increasing the protein stability. Hydroxylated by HIF1AN. In terms of processing, (Microbial infection) Deubiquitinated by porcine reproductive and respiratory syndrome virus Nsp2 protein, which thereby interferes with NFKBIA degradation and impairs subsequent NF-kappa-B activation.

The protein localises to the cytoplasm. Its subcellular location is the nucleus. Functionally, inhibits the activity of dimeric NF-kappa-B/REL complexes by trapping REL (RELA/p65 and NFKB1/p50) dimers in the cytoplasm by masking their nuclear localization signals. On cellular stimulation by immune and pro-inflammatory responses, becomes phosphorylated promoting ubiquitination and degradation, enabling the dimeric RELA to translocate to the nucleus and activate transcription. The polypeptide is NF-kappa-B inhibitor alpha (NFKBIA) (Homo sapiens (Human)).